We begin with the raw amino-acid sequence, 210 residues long: Protoporphyrinogen IX oxidase (210 aa).

5 consecutive transmembrane segments (helical) span residues 22-42, 74-94, 103-123, 141-161, and 165-185; these read WFKA…FYLV, YNII…GLIF, GWLH…FYCG, FRAL…LAVF, and LPLD…AASI. Histidine 27 lines the heme pocket. Lysine 108 serves as a coordination point for heme.

It belongs to the HemJ family. In terms of assembly, homodimer. Can also form higher oligomers, most probably tetramers. Interacts with Sll1106, however it is unlikely that Sll1106 is required for PPO function. It depends on heme b as a cofactor.

Its subcellular location is the cell membrane. The enzyme catalyses protoporphyrinogen IX + 3 A = protoporphyrin IX + 3 AH2. It participates in porphyrin-containing compound metabolism; protoporphyrin-IX biosynthesis; protoporphyrin-IX from protoporphyrinogen-IX: step 1/1. In terms of biological role, catalyzes the oxidation of protoporphyrinogen IX to protoporphyrin IX. Is involved in the biosynthesis of tetrapyrrole molecules like heme and chlorophyll. Does not use oxygen or artificial electron acceptors such as menadione or benzoquinone. Is functionally coupled with coproporphyrinogen III oxidase (CPO). Is essential for growth. The sequence is that of Protoporphyrinogen IX oxidase from Synechocystis sp. (strain ATCC 27184 / PCC 6803 / Kazusa).